The following is a 363-amino-acid chain: MKPSIQSRLEQLVERFEEVNALLSDASVIANQDKFRDLSREFAEIEPVVKCFQAWRQSLEDIDAATELAKDGDADMREMAEEELASARARSEELDEELQRLMLPKDPNDTKNVFLEIRAGTGGDEAAIFAGDLFRMYSRYAEKRRWQVEVLSENEGEHGGFKEIIARLSGDGVYGTLKFESGAHRVQRVPETESQGRIHTSACTVAVMPEADEAEAVEINKADLRVDTFRSSGAGGQHVNKTDSAIRITHLPTGIVVECQEERSQHKNRAKALSLLASRLQNAELEKQQKSMAETRKSLVGSGDRSERIRTYNFPQGRVTDHRINLTLYKLDEVIAGDLDAVVVPLQQEHQAELLADMANEQQ.

Gln-237 carries the N5-methylglutamine modification.

Belongs to the prokaryotic/mitochondrial release factor family. Methylated by PrmC. Methylation increases the termination efficiency of RF1.

It is found in the cytoplasm. Its function is as follows. Peptide chain release factor 1 directs the termination of translation in response to the peptide chain termination codons UAG and UAA. This Marinobacter nauticus (strain ATCC 700491 / DSM 11845 / VT8) (Marinobacter aquaeolei) protein is Peptide chain release factor 1.